A 348-amino-acid polypeptide reads, in one-letter code: D-alanine--D-alanine ligase (348 aa).

The ATP-grasp domain occupies K132–T334. L162–E217 lines the ATP pocket. The Mg(2+) site is built by D288, E301, and N303.

It belongs to the D-alanine--D-alanine ligase family. It depends on Mg(2+) as a cofactor. Requires Mn(2+) as cofactor.

Its subcellular location is the cytoplasm. The catalysed reaction is 2 D-alanine + ATP = D-alanyl-D-alanine + ADP + phosphate + H(+). Its pathway is cell wall biogenesis; peptidoglycan biosynthesis. Cell wall formation. This is D-alanine--D-alanine ligase from Streptococcus pyogenes serotype M12 (strain MGAS2096).